The chain runs to 152 residues: Protein D1 (152 aa).

This sequence belongs to the phosphatidylethanolamine-binding protein family.

The polypeptide is Protein D1 (D1) (Onchocerca volvulus).